Consider the following 259-residue polypeptide: 3-deoxy-manno-octulosonate cytidylyltransferase (259 aa).

The protein belongs to the KdsB family.

The protein resides in the cytoplasm. The catalysed reaction is 3-deoxy-alpha-D-manno-oct-2-ulosonate + CTP = CMP-3-deoxy-beta-D-manno-octulosonate + diphosphate. It participates in nucleotide-sugar biosynthesis; CMP-3-deoxy-D-manno-octulosonate biosynthesis; CMP-3-deoxy-D-manno-octulosonate from 3-deoxy-D-manno-octulosonate and CTP: step 1/1. Its pathway is bacterial outer membrane biogenesis; lipopolysaccharide biosynthesis. Its function is as follows. Activates KDO (a required 8-carbon sugar) for incorporation into bacterial lipopolysaccharide in Gram-negative bacteria. The chain is 3-deoxy-manno-octulosonate cytidylyltransferase from Xanthomonas oryzae pv. oryzae (strain KACC10331 / KXO85).